The primary structure comprises 315 residues: GTP cyclohydrolase MptA (315 aa).

It belongs to the GTP cyclohydrolase IV family. As to quaternary structure, homodimer. The cofactor is Fe(2+).

The catalysed reaction is GTP + H2O = 7,8-dihydroneopterin 2',3'-cyclic phosphate + formate + diphosphate + H(+). It participates in cofactor biosynthesis; 5,6,7,8-tetrahydromethanopterin biosynthesis. Functionally, converts GTP to 7,8-dihydro-D-neopterin 2',3'-cyclic phosphate, the first intermediate in the biosynthesis of coenzyme methanopterin. The chain is GTP cyclohydrolase MptA from Methanococcus maripaludis (strain C5 / ATCC BAA-1333).